The primary structure comprises 522 residues: Tryptophan 2-halogenase (522 aa).

9 residues coordinate FAD: Ala-17, Glu-36, Arg-42, His-44, Ile-45, Ser-48, Arg-103, Ile-127, and Asp-296. Ser-307 and Gly-308 together coordinate chloride. Val-309 is a binding site for FAD.

Belongs to the flavin-dependent halogenase family.

Involved in the incorporation of a chlorinated tryptophan residue into halogenated forms of the secondary metabolites called chondramides. The sequence is that of Tryptophan 2-halogenase from Chondromyces crocatus.